The sequence spans 438 residues: GTPase Der (438 aa).

EngA-type G domains lie at Pro-4–Ala-168 and Val-176–Arg-351. Residues Gly-10 to Ser-17, Asp-57 to Ile-61, Asn-120 to Asp-123, Gly-182 to Ser-189, Asp-229 to Met-233, and Asn-294 to Asp-297 each bind GTP. Residues Arg-352–Glu-436 form the KH-like domain.

It belongs to the TRAFAC class TrmE-Era-EngA-EngB-Septin-like GTPase superfamily. EngA (Der) GTPase family. In terms of assembly, associates with the 50S ribosomal subunit.

In terms of biological role, GTPase that plays an essential role in the late steps of ribosome biogenesis. The chain is GTPase Der from Desulforudis audaxviator (strain MP104C).